The chain runs to 549 residues: Indole-3-acetic acid-amido synthetase GH3.2 (549 aa).

This sequence belongs to the IAA-amido conjugating enzyme family. As to expression, expressed in flowers, pollen, cotyledons, stipules, true leaves, hypocotyls, and all parts of the roots except for the primary root tips.

Its function is as follows. Catalyzes the synthesis of indole-3-acetic acid (IAA)-amino acid conjugates, providing a mechanism for the plant to cope with the presence of excess auxin. Strongly reactive with Glu, Gln, Trp, Asp, Ala, Leu, Phe, Gly, Tyr, Met, Ile and Val. Little or no product formation with His, Ser, Thr, Arg, Lys, or Cys. Also active on pyruvic and butyric acid analogs of IAA, PAA and the synthetic auxin naphthaleneacetic acid (NAA). The two chlorinated synthetic auxin herbicides 2,4-D and 3,6-dichloro-o-anisic acid (dicamba) cannot be used as substrates. The polypeptide is Indole-3-acetic acid-amido synthetase GH3.2 (GH3.2) (Arabidopsis thaliana (Mouse-ear cress)).